Here is an 889-residue protein sequence, read N- to C-terminus: Alanine--tRNA ligase (889 aa).

The Zn(2+) site is built by His-566, His-570, Cys-683, and His-687.

It belongs to the class-II aminoacyl-tRNA synthetase family. Requires Zn(2+) as cofactor.

The protein localises to the cytoplasm. It catalyses the reaction tRNA(Ala) + L-alanine + ATP = L-alanyl-tRNA(Ala) + AMP + diphosphate. Functionally, catalyzes the attachment of alanine to tRNA(Ala) in a two-step reaction: alanine is first activated by ATP to form Ala-AMP and then transferred to the acceptor end of tRNA(Ala). Also edits incorrectly charged Ser-tRNA(Ala) and Gly-tRNA(Ala) via its editing domain. The polypeptide is Alanine--tRNA ligase (Herpetosiphon aurantiacus (strain ATCC 23779 / DSM 785 / 114-95)).